A 508-amino-acid polypeptide reads, in one-letter code: Cobyric acid synthase (508 aa).

A GATase cobBQ-type domain is found at 255–454 (ELNIAVLKLP…LHGVFESGPW (200 aa)). Catalysis depends on Cys336, which acts as the Nucleophile. Residue His446 is part of the active site.

It belongs to the CobB/CobQ family. CobQ subfamily.

Its pathway is cofactor biosynthesis; adenosylcobalamin biosynthesis. Catalyzes amidations at positions B, D, E, and G on adenosylcobyrinic A,C-diamide. NH(2) groups are provided by glutamine, and one molecule of ATP is hydrogenolyzed for each amidation. The protein is Cobyric acid synthase of Synechococcus sp. (strain CC9311).